Consider the following 406-residue polypeptide: Tryptophan 2,3-dioxygenase (406 aa).

S19 carries the phosphoserine modification. Substrate-binding positions include 72–76 (FIITH) and R144. Residue H328 participates in heme binding. T342 serves as a coordination point for substrate.

Belongs to the tryptophan 2,3-dioxygenase family. Homotetramer. Dimer of dimers. The cofactor is heme.

It carries out the reaction L-tryptophan + O2 = N-formyl-L-kynurenine. It participates in amino-acid degradation; L-tryptophan degradation via kynurenine pathway; L-kynurenine from L-tryptophan: step 1/2. In terms of biological role, heme-dependent dioxygenase that catalyzes the oxidative cleavage of the L-tryptophan (L-Trp) pyrrole ring and converts L-tryptophan to N-formyl-L-kynurenine. Catalyzes the oxidative cleavage of the indole moiety. This Bos taurus (Bovine) protein is Tryptophan 2,3-dioxygenase.